Here is a 1682-residue protein sequence, read N- to C-terminus: MLASPEPKGLVPFTKESFELIKQHIAKTHNEDHEEEDLKPTPDLEVGKKLPFIYGNLSQGMVSEPLEDVDPYYYKKKNTFIVLNKNRTIFRFNAASILCTLSPFNCIRRTTIKVLVHPFFQLFILISVLIDCVFMSLTNLPKWRPVLENTLLGIYTFEILVKLFARGVWAGSFSFLGDPWNWLDFSVTVFEVIIRYSPLDFIPTLQTARTLRILKIIPLNQGLKSLVGVLIHCLKQLIGVIILTLFFLSIFSLIGMGLFMGNLKHKCFRWPQENENETLHNRTGNPYYIRETENFYYLEGERYALLCGNRTDAGQCPEGYVCVKAGINPDQGFTNFDSFGWALFALFRLMAQDYPEVLYHQILYASGKVYMIFFVVVSFLFSFYMASLFLGILAMAYEEEKQRVGEISKKIEPKFQQTGKELQEGNETDEAKTIQIEMKKRSPISTDTSLDVLEDATLRHKEELEKSKKICPLYWYKFAKTFLIWNCSPCWLKLKEFVHRIIMAPFTDLFLIICIILNVCFLTLEHYPMSKQTNTLLNIGNLVFIGIFTAEMIFKIIAMHPYGYFQVGWNIFDSMIVFHGLIELCLANVAGMALLRLFRMLRIFKLGKYWPTFQILMWSLSNSWVALKDLVLLLFTFIFFSAAFGMKLFGKNYEEFVCHIDKDCQLPRWHMHDFFHSFLNVFRILCGEWVETLWDCMEVAGQSWCIPFYLMVILIGNLLVLYLFLALVSSFSSCKDVTAEENNEAKNLQLAVARIKKGINYVLLKILCKTQNVPKDTMDHVNEVYVKEDISDHTLSELSNTQDFLKDKEKSSGTEKNATENESQSLIPSPSVSETVPIASGESDIENLDNKEIQSKSGDGGSKEKIKQSSSSECSTVDIAISEEEEMFYGGERSKHLKNGCRRGSSLGQISGASKKGKIWQNIRKTCCKIVENNWFKCFIGLVTLLSTGTLAFEDIYMDQRKTIKILLEYADMIFTYIFILEMLLKWMAYGFKAYFSNGWYRLDFVVVIVFCLSLIGKTREELKPLISMKFLRPLRVLSQFERMKVVVRALIKTTLPTLNVFLVCLMIWLIFSIMGVDLFAGRFYECIDPTSGERFPSSEVMNKSRCESLLFNESMLWENAKMNFDNVGNGFLSLLQVATFNGWITIMNSAIDSVAVNIQPHFEVNIYMYCYFINFIIFGVFLPLSMLITVIIDNFNKHKIKLGGSNIFITVKQRKQYRRLKKLMYEDSQRPVPRPLNKLQGFIFDVVTSQAFNVIVMVLICFQAIAMMIDTDVQSLQMSIALYWINSIFVMLYTMECILKLIAFRCFYFTIAWNIFDFMVVIFSITGLCLPMTVGSYLVPPSLVQLILLSRIIHMLRLGKGPKVFHNLMLPLMLSLPALLNIILLIFLVMFIYAVFGMYNFAYVKKEAGINDVSNFETFGNSMLCLFQVAIFAGWDGMLDAIFNSKWSDCDPDKINPGTQVRGDCGNPSVGIFYFVSYILISWLIIVNMYIVVVMEFLNIASKKKNKTLSEDDFRKFFQVWKRFDPDRTQYIDSSKLSDFAAALDPPLFMAKPNKGQLIALDLPMAVGDRIHCLDILLAFTKRVMGQDVRMEKVVSEIESGFLLANPFKITCEPITTTLKRKQEAVSATIIQRAYKNYRLRRNDKNTSDIHMIDGDRDVHATKEGAYFDKAKEKSPIQSQI.

Residues 1–117 are Cytoplasmic-facing; sequence MLASPEPKGL…RRTTIKVLVH (117 aa). An I repeat occupies 100–401; it reads TLSPFNCIRR…ILAMAYEEEK (302 aa). The chain crosses the membrane as a helical span at residues 118-137; it reads PFFQLFILISVLIDCVFMSL. The Extracellular portion of the chain corresponds to 138-141; it reads TNLP. Residues 142-167 form a helical membrane-spanning segment; sequence KWRPVLENTLLGIYTFEILVKLFARG. The Cytoplasmic segment spans residues 168-178; sequence VWAGSFSFLGD. Residues 179–196 form a helical membrane-spanning segment; sequence PWNWLDFSVTVFEVIIRY. Residues 197 to 200 are Extracellular-facing; it reads SPLD. A helical transmembrane segment spans residues 201-219; the sequence is FIPTLQTARTLRILKIIPL. At 220–237 the chain is on the cytoplasmic side; the sequence is NQGLKSLVGVLIHCLKQL. A helical transmembrane segment spans residues 238 to 259; that stretch reads IGVIILTLFFLSIFSLIGMGLF. Over 260–338 the chain is Extracellular; sequence MGNLKHKCFR…PDQGFTNFDS (79 aa). Cys267 and Cys307 form a disulfide bridge. N-linked (GlcNAc...) asparagine glycans are attached at residues Asn276, Asn281, and Asn309. Residues 339–366 constitute an intramembrane region (pore-forming); the sequence is FGWALFALFRLMAQDYPEVLYHQILYAS. Position 367 (Gly367) is a topological domain, extracellular. The helical transmembrane segment at 368-407 threads the bilayer; sequence KVYMIFFVVVSFLFSFYMASLFLGILAMAYEEEKQRVGEI. Residues 408 to 505 lie on the Cytoplasmic side of the membrane; sequence SKKIEPKFQQ…EFVHRIIMAP (98 aa). Residue Ser442 is modified to Phosphoserine; by PKA. The stretch at 487–758 is one II repeat; the sequence is CSPCWLKLKE…QLAVARIKKG (272 aa). A helical membrane pass occupies residues 506 to 521; the sequence is FTDLFLIICIILNVCF. The Extracellular segment spans residues 522 to 530; that stretch reads LTLEHYPMS. A helical membrane pass occupies residues 531–559; the sequence is KQTNTLLNIGNLVFIGIFTAEMIFKIIAM. Over 560 to 568 the chain is Cytoplasmic; sequence HPYGYFQVG. Residues 569 to 586 traverse the membrane as a helical segment; sequence WNIFDSMIVFHGLIELCL. The Extracellular portion of the chain corresponds to 587–592; it reads ANVAGM. The helical transmembrane segment at 593–609 threads the bilayer; it reads ALLRLFRMLRIFKLGKY. The Cytoplasmic portion of the chain corresponds to 610–626; it reads WPTFQILMWSLSNSWVA. The chain crosses the membrane as a helical span at residues 627–655; sequence LKDLVLLLFTFIFFSAAFGMKLFGKNYEE. Topologically, residues 656-673 are extracellular; sequence FVCHIDKDCQLPRWHMHD. Disulfide bonds link Cys658-Cys664 and Cys696-Cys705. Residues 674–700 constitute an intramembrane region (pore-forming); that stretch reads FFHSFLNVFRILCGEWVETLWDCMEVA. Gly701 is a topological domain (extracellular). The helical transmembrane segment at 702–732 threads the bilayer; the sequence is QSWCIPFYLMVILIGNLLVLYLFLALVSSFS. The Cytoplasmic portion of the chain corresponds to 733-934; the sequence is SCKDVTAEEN…KTCCKIVENN (202 aa). Phosphothreonine; by PKA is present on Thr777. The segment at 801 to 871 is disordered; it reads TQDFLKDKEK…SKEKIKQSSS (71 aa). Residues 804–819 are compositionally biased toward basic and acidic residues; the sequence is FLKDKEKSSGTEKNAT. The segment covering 820 to 834 has biased composition (polar residues); that stretch reads ENESQSLIPSPSVSE. Ser843 bears the Phosphoserine mark. Residues Ser869 and Ser905 each carry the phosphoserine; by PKA modification. An III repeat occupies 916-1224; it reads KGKIWQNIRK…RKQYRRLKKL (309 aa). The helical transmembrane segment at 935–953 threads the bilayer; it reads WFKCFIGLVTLLSTGTLAF. Residues 954-961 lie on the Extracellular side of the membrane; the sequence is EDIYMDQR. The chain crosses the membrane as a helical span at residues 962-990; the sequence is KTIKILLEYADMIFTYIFILEMLLKWMAY. Topologically, residues 991–998 are cytoplasmic; the sequence is GFKAYFSN. A helical transmembrane segment spans residues 999-1020; the sequence is GWYRLDFVVVIVFCLSLIGKTR. Position 1021 (Glu1021) is a topological domain, extracellular. Residues 1022–1040 traverse the membrane as a helical segment; sequence ELKPLISMKFLRPLRVLSQ. Residues 1041 to 1055 are Cytoplasmic-facing; the sequence is FERMKVVVRALIKTT. Residues 1056–1080 form a helical membrane-spanning segment; that stretch reads LPTLNVFLVCLMIWLIFSIMGVDLF. Residues 1081–1127 lie on the Extracellular side of the membrane; it reads AGRFYECIDPTSGERFPSSEVMNKSRCESLLFNESMLWENAKMNFDN. Cys1087 and Cys1107 form a disulfide bridge. N-linked (GlcNAc...) asparagine glycans are attached at residues Asn1103 and Asn1113. The pore-forming intramembrane region spans 1128 to 1154; it reads VGNGFLSLLQVATFNGWITIMNSAIDS. Over 1155–1167 the chain is Extracellular; the sequence is VAVNIQPHFEVNI. Residues 1168–1202 traverse the membrane as a helical segment; the sequence is YMYCYFINFIIFGVFLPLSMLITVIIDNFNKHKIK. Topologically, residues 1203–1250 are cytoplasmic; it reads LGGSNIFITVKQRKQYRRLKKLMYEDSQRPVPRPLNKLQGFIFDVVTS. Residues 1233-1531 form an IV repeat; sequence VPRPLNKLQG…WKRFDPDRTQ (299 aa). The chain crosses the membrane as a helical span at residues 1251-1272; that stretch reads QAFNVIVMVLICFQAIAMMIDT. Residues 1273 to 1276 are Extracellular-facing; sequence DVQS. A helical transmembrane segment spans residues 1277–1305; it reads LQMSIALYWINSIFVMLYTMECILKLIAF. Residues 1306 to 1312 are Cytoplasmic-facing; it reads RCFYFTI. Residues 1313–1338 form a helical membrane-spanning segment; it reads AWNIFDFMVVIFSITGLCLPMTVGSY. Residues 1339–1341 lie on the Extracellular side of the membrane; that stretch reads LVP. A helical transmembrane segment spans residues 1342–1362; it reads PSLVQLILLSRIIHMLRLGKG. Topologically, residues 1363–1377 are cytoplasmic; the sequence is PKVFHNLMLPLMLSL. The chain crosses the membrane as a helical span at residues 1378-1402; that stretch reads PALLNIILLIFLVMFIYAVFGMYNF. The Extracellular segment spans residues 1403-1420; that stretch reads AYVKKEAGINDVSNFETF. Positions 1421–1444 form an intramembrane region, pore-forming; it reads GNSMLCLFQVAIFAGWDGMLDAIF. Over 1445–1468 the chain is Extracellular; it reads NSKWSDCDPDKINPGTQVRGDCGN. A disulfide bond links Cys1451 and Cys1466. A helical membrane pass occupies residues 1469–1504; it reads PSVGIFYFVSYILISWLIIVNMYIVVVMEFLNIASK. At 1505–1682 the chain is on the cytoplasmic side; the sequence is KKNKTLSEDD…KEKSPIQSQI (178 aa).

The protein belongs to the sodium channel (TC 1.A.1.10) family. SCN7A subfamily. In terms of assembly, the sodium channel formed by SCN7A is probably a heterooligomeric complex consisting of the ion conducting pore forming alpha subunit SCN7A and regulatory beta subunits such as SCN3B. Interacts with ATP1A1; activates ATP1A1 and thereby indirectly signals to nearby neurons to regulate sodium homeostasis. As to expression, heart and uterus.

It is found in the cell membrane. The catalysed reaction is Na(+)(in) = Na(+)(out). Its function is as follows. Sodium leak channel functioning as an osmosensor regulating sodium ion levels in various tissues and organs. While most sodium channels are voltage-gated, SCN7A is not and lets sodium flow through membrane along its concentration gradient. In glial cells of the central nervous system, senses body-fluid sodium levels and controls salt intake behavior as well as voluntary water intake through activation of nearby neurons to maintain appropriate sodium levels in the body. By mediating sodium influx into keratinocytes, also plays a role in skin barrier homeostasis. The chain is Sodium channel protein type 7 subunit alpha from Homo sapiens (Human).